Here is a 433-residue protein sequence, read N- to C-terminus: L-2-hydroxyglutarate dehydrogenase, mitochondrial (433 aa).

Belongs to the L2HGDH family. It depends on FAD as a cofactor.

Its subcellular location is the mitochondrion. It carries out the reaction (S)-2-hydroxyglutarate + A = 2-oxoglutarate + AH2. This chain is L-2-hydroxyglutarate dehydrogenase, mitochondrial, found in Caenorhabditis elegans.